Reading from the N-terminus, the 463-residue chain is Cytoplasmic 60S subunit biogenesis factor SPCC550.15c (463 aa).

2 consecutive C2H2-type zinc fingers follow at residues 5 to 30 (FACT…DWHH) and 70 to 94 (QNCE…SKKH). The disordered stretch occupies residues 109–136 (KLQSEDASSIASSTLSMGEPVVDSEIEE). The segment covering 113-124 (EDASSIASSTLS) has biased composition (polar residues). 2 positions are modified to phosphoserine: Ser-150 and Ser-155. The disordered stretch occupies residues 155–189 (SLHGRESEPSKTELATSIPQSNEASKSHLFTQEPT). A compositionally biased stretch (polar residues) spans 167 to 188 (ELATSIPQSNEASKSHLFTQEP). 2 consecutive C2H2-type zinc fingers follow at residues 208–231 (RDCL…KASH) and 259–283 (FTCL…QKGH). Residues 317 to 338 (TVVEEDGSSGEGDWEDVSDDSD) are compositionally biased toward acidic residues. Disordered regions lie at residues 317–341 (TVVE…DNSS) and 444–463 (ANKM…ALLQ).

This sequence belongs to the REI1 family. In terms of assembly, associates with nascent pre-60S particles that have not yet entered the translating pool, and is released from mature 60S subunits.

It is found in the cytoplasm. Functionally, pre-60S-associated factor involved in the cytoplasmic maturation of the 60S subunit. Involved in the dissociation and recycling of other late pre-60S factors before newly synthesized large ribosomal subunits enter translation. The sequence is that of Cytoplasmic 60S subunit biogenesis factor SPCC550.15c from Schizosaccharomyces pombe (strain 972 / ATCC 24843) (Fission yeast).